The sequence spans 448 residues: Rhodopsin (448 aa).

Topologically, residues 2–33 are extracellular; that stretch reads GRDLRDNETWWYNPSIVVHPHWREFDQVPDAV. The N-linked (GlcNAc...) asparagine glycan is linked to N8. A helical membrane pass occupies residues 34–58; sequence YYSLGIFIGICGIIGCGGNGIVIYL. Residues 59–70 are Cytoplasmic-facing; that stretch reads FTKTKSLQTPAN. A helical membrane pass occupies residues 71–97; sequence MFIINLAFSDFTFSLVNGFPLMTISCF. Residues 98–109 are Extracellular-facing; the sequence is LKKWIFGFAACK. A disulfide bridge links C108 with C186. Residues 110-131 traverse the membrane as a helical segment; it reads VYGFIGGIFGFMSIMTMAMISI. Topologically, residues 132-151 are cytoplasmic; sequence DRYNVIGRPMAASKKMSHRR. The chain crosses the membrane as a helical span at residues 152–172; it reads AFIMIIFVWLWSVLWAIGPIF. The Extracellular portion of the chain corresponds to 173–199; that stretch reads GWGAYTLEGVLCNCSFDYISRDSTTRS. The chain crosses the membrane as a helical span at residues 200–224; sequence NILCMFILGFFGPILIIFFCYFNIV. The Cytoplasmic segment spans residues 225–261; sequence MSVSNHEKEMAAMAKRLNAKELRKAQAGANAEMRLAK. A helical membrane pass occupies residues 262–283; the sequence is ISIVIVSQFLLSWSPYAVVALL. At 284 to 293 the chain is on the extracellular side; the sequence is AQFGPLEWVT. The chain crosses the membrane as a helical span at residues 294–315; sequence PYAAQLPVMFAKASAIHNPMIY. K305 is modified (N6-(retinylidene)lysine). Residues 316–448 lie on the Cytoplasmic side of the membrane; that stretch reads SVSHPKFREA…QGVDNQAYQA (133 aa). 2 S-palmitoyl cysteine lipidation sites follow: C336 and C337. The segment covering 343–352 has biased composition (acidic residues); it reads ETEDDKDAET. A disordered region spans residues 343 to 448; the sequence is ETEDDKDAET…QGVDNQAYQA (106 aa). The segment covering 359 to 391 has biased composition (low complexity); it reads SSDAAPSADAAQMKEMMAMMQKMQQQQAAYPPQ. Pro residues predominate over residues 392 to 437; it reads GYAPPPQGYPPQGYPPQGYPPQGYPPQGYPPPPQGAPPQGAPPAAP.

This sequence belongs to the G-protein coupled receptor 1 family. Opsin subfamily. In terms of processing, contains one covalently linked retinal chromophore. Upon light absorption, the covalently bound 11-cis-retinal is converted to all-trans-retinal. After hydrolysis of the Schiff base and release of the covalently bound all-trans-retinal, active rhodopsin is regenerated by binding of a fresh molecule of 11-cis-retinal. Retina, rhabdomere membrane of photoreceptor cells (at protein level).

Its subcellular location is the cell projection. The protein localises to the rhabdomere membrane. In terms of biological role, photoreceptor required for image-forming vision at low light intensity. Light-induced isomerization of 11-cis to all-trans retinal triggers a conformational change that activates signaling via G-proteins. Signaling mediates the activation of phospholipase C. Subsequent receptor phosphorylation mediates displacement of the bound G-protein alpha subunit by arrestin and terminates signaling. In Todarodes pacificus (Japanese flying squid), this protein is Rhodopsin (RHO).